Here is a 167-residue protein sequence, read N- to C-terminus: MLPMITGFMNYGQQTLRAARYIGQGFMITLSHTNRLPVTIQYPYEKLITSERFRGRIHFEFDKCIACEVCVRVCPIDLPVVDWKLETNIRKKRLLNYSIDFGICIFCGNCVEYCPTNCLSMTEEYEFSTYDRHELNYNQIALGRLPMSVIDDYTIRTILNSPQTING.

2 consecutive 4Fe-4S ferredoxin-type domains span residues 55-84 (GRIH…VDWK) and 95-124 (LNYS…MTEE). [4Fe-4S] cluster is bound by residues Cys64, Cys67, Cys70, Cys74, Cys104, Cys107, Cys110, and Cys114.

The protein belongs to the complex I 23 kDa subunit family. NDH is composed of at least 16 different subunits, 5 of which are encoded in the nucleus. [4Fe-4S] cluster is required as a cofactor.

It is found in the plastid. It localises to the chloroplast thylakoid membrane. It carries out the reaction a plastoquinone + NADH + (n+1) H(+)(in) = a plastoquinol + NAD(+) + n H(+)(out). The enzyme catalyses a plastoquinone + NADPH + (n+1) H(+)(in) = a plastoquinol + NADP(+) + n H(+)(out). In terms of biological role, NDH shuttles electrons from NAD(P)H:plastoquinone, via FMN and iron-sulfur (Fe-S) centers, to quinones in the photosynthetic chain and possibly in a chloroplast respiratory chain. The immediate electron acceptor for the enzyme in this species is believed to be plastoquinone. Couples the redox reaction to proton translocation, and thus conserves the redox energy in a proton gradient. This Barbarea verna (Land cress) protein is NAD(P)H-quinone oxidoreductase subunit I, chloroplastic.